Here is a 142-residue protein sequence, read N- to C-terminus: Small ribosomal subunit protein uS12 (142 aa).

This sequence belongs to the universal ribosomal protein uS12 family. As to quaternary structure, part of the 30S ribosomal subunit.

With S4 and S5 plays an important role in translational accuracy. Located at the interface of the 30S and 50S subunits. This Methanospirillum hungatei JF-1 (strain ATCC 27890 / DSM 864 / NBRC 100397 / JF-1) protein is Small ribosomal subunit protein uS12.